The primary structure comprises 428 residues: MDVVDSLLVNGSNITPPCELGLENETLFCLDQPRPSKEWQPAVQILLYSLIFLLSVLGNTLVITVLIRNKRMRTVTNIFLLSLAVSDLMLCLFCMPFNLIPNLLKDFIFGSAVCKTTTYFMGTSVSVSTFNLVAISLERYGAICKPLQSRVWQTKSHALKVIAATWCLSFTIMTPYPIYSNLVPFTKNNNQTANMCRFLLPNDVMQQSWHTFLLLILFLIPGIVMMVAYGLISLELYQGIKFEASQKKSAKERKPSTTSSGKYEDSDGCYLQKTRPPRKLELRQLSTGSSSRANRIRSNSSAANLMAKKRVIRMLIVIVVLFFLCWMPIFSANAWRAYDTASAERRLSGTPISFILLLSYTSSCVNPIIYCFMNKRFRLGFMATFPCCPNPGPPGARGEVGEEEEGGTTGASLSRFSYSHMSASVPPQ.

The Extracellular segment spans residues 1–41 (MDVVDSLLVNGSNITPPCELGLENETLFCLDQPRPSKEWQP). 2 N-linked (GlcNAc...) asparagine glycosylation sites follow: N10 and N24. The cysteines at positions 18 and 29 are disulfide-linked. A helical membrane pass occupies residues 42-67 (AVQILLYSLIFLLSVLGNTLVITVLI). At 68–77 (RNKRMRTVTN) the chain is on the cytoplasmic side. The chain crosses the membrane as a helical span at residues 78–104 (IFLLSLAVSDLMLCLFCMPFNLIPNLL). The Extracellular portion of the chain corresponds to 105-115 (KDFIFGSAVCK). Cysteines 114 and 196 form a disulfide. Residues 116-137 (TTTYFMGTSVSVSTFNLVAISL) form a helical membrane-spanning segment. Residues 138–157 (ERYGAICKPLQSRVWQTKSH) lie on the Cytoplasmic side of the membrane. Residues 158-178 (ALKVIAATWCLSFTIMTPYPI) form a helical membrane-spanning segment. Residues 179-210 (YSNLVPFTKNNNQTANMCRFLLPNDVMQQSWH) lie on the Extracellular side of the membrane. A glycan (N-linked (GlcNAc...) asparagine) is linked at N190. Residues 211 to 234 (TFLLLILFLIPGIVMMVAYGLISL) form a helical membrane-spanning segment. At 235–313 (ELYQGIKFEA…NLMAKKRVIR (79 aa)) the chain is on the cytoplasmic side. Residues 248–272 (KSAKERKPSTTSSGKYEDSDGCYLQ) are disordered. Residues 314–334 (MLIVIVVLFFLCWMPIFSANA) traverse the membrane as a helical segment. Topologically, residues 335 to 349 (WRAYDTASAERRLSG) are extracellular. The chain crosses the membrane as a helical span at residues 350 to 373 (TPISFILLLSYTSSCVNPIIYCFM). Topologically, residues 374–428 (NKRFRLGFMATFPCCPNPGPPGARGEVGEEEEGGTTGASLSRFSYSHMSASVPPQ) are cytoplasmic. C387 is lipidated: S-palmitoyl cysteine. Residues 394–428 (PGARGEVGEEEEGGTTGASLSRFSYSHMSASVPPQ) form a disordered region. The segment covering 411-422 (ASLSRFSYSHMS) has biased composition (polar residues).

The protein belongs to the G-protein coupled receptor 1 family.

Its subcellular location is the cell membrane. Receptor for cholecystokinin. Mediates pancreatic growth and enzyme secretion, smooth muscle contraction of the gall bladder and stomach. Has a 1000-fold higher affinity for CCK rather than for gastrin. It modulates feeding and dopamine-induced behavior in the central and peripheral nervous system. This receptor mediates its action by association with G proteins that activate a phosphatidylinositol-calcium second messenger system. This is Cholecystokinin receptor type A (CCKAR) from Homo sapiens (Human).